The sequence spans 89 residues: Cell division topological specificity factor (89 aa).

It belongs to the MinE family.

Its function is as follows. Prevents the cell division inhibition by proteins MinC and MinD at internal division sites while permitting inhibition at polar sites. This ensures cell division at the proper site by restricting the formation of a division septum at the midpoint of the long axis of the cell. This chain is Cell division topological specificity factor, found in Desulforudis audaxviator (strain MP104C).